The chain runs to 460 residues: Protein btn1 (460 aa).

A run of 11 helical transmembrane segments spans residues 42-62 (VCVA…VILS), 76-96 (VVLL…PYFI), 105-125 (IIIF…SPPY), 135-155 (LAGI…FVGL), 164-184 (LAAW…AYAL), 195-215 (ATLL…FMVL), 287-307 (GLFF…YTIN), 323-343 (FAHF…GVFI), 356-376 (LYLP…QAVF), 378-398 (FIPS…LGGL), and 428-448 (AAGI…LCDW).

It belongs to the battenin family.

The protein localises to the vacuole membrane. In terms of biological role, involved in vacuolar transport and vacuole pH homeostasis. Also required for cytokinesis. In Aspergillus fumigatus (strain ATCC MYA-4609 / CBS 101355 / FGSC A1100 / Af293) (Neosartorya fumigata), this protein is Protein btn1 (btn1).